Consider the following 550-residue polypeptide: MTDLRSDTIRKGYERAPNRSLLRSLGVTDREIELPFIGIANAFNTIVPGHTHLRQLSDKVKEGIAAAGGVPFEFGVIGICDGIAMGHEGMRYSLPSRENIADSIELMVQAHRFDGLVCVGTCDKIVPGMLMAAVRTNIPTIVVTGGAMLPGSSGGKDLSLIDVFEGVGKVAAGTMEEDALKELECCAMPGCGSCQGLYTANTMACMTETMGMSLPGCAAVPAVEAAKLRIARESGEAIIPLVKKNSTARDIVTKKSLENAIRVDMALGGSTNTVLHLMAIATEAEIPLSLADFNRIADEIPHICHMLPAGPYSMQALYRAGGIPAVLKRLEKHLDDCPTVSGLSLYQVARNAMIKNEQVIRSLDAPVSPAGGLRILFGSLAPDGAVVKSAAVPKEIWKHTGPARVFESEEPAMAAILSRQIHEGDAVIIRNEGPRGGPGMPEMLSATSALMGVGYKNVVLITDGRFSGGTRGPCIGHVAPEAAVGGPIALVQDGDRIAVDLFMRTIDLLVDPEVLTSRKAAWKPVMRPVTGVLARYAKTVGQANLGAVLR.

A Mg(2+)-binding site is contributed by Asp-81. Cys-122 provides a ligand contact to [2Fe-2S] cluster. Positions 123 and 124 each coordinate Mg(2+). Lys-124 carries the N6-carboxylysine modification. Cys-194 contributes to the [2Fe-2S] cluster binding site. Glu-442 contacts Mg(2+). Catalysis depends on Ser-467, which acts as the Proton acceptor.

This sequence belongs to the IlvD/Edd family. In terms of assembly, homodimer. It depends on [2Fe-2S] cluster as a cofactor. The cofactor is Mg(2+).

It carries out the reaction (2R)-2,3-dihydroxy-3-methylbutanoate = 3-methyl-2-oxobutanoate + H2O. The enzyme catalyses (2R,3R)-2,3-dihydroxy-3-methylpentanoate = (S)-3-methyl-2-oxopentanoate + H2O. Its pathway is amino-acid biosynthesis; L-isoleucine biosynthesis; L-isoleucine from 2-oxobutanoate: step 3/4. It participates in amino-acid biosynthesis; L-valine biosynthesis; L-valine from pyruvate: step 3/4. Functions in the biosynthesis of branched-chain amino acids. Catalyzes the dehydration of (2R,3R)-2,3-dihydroxy-3-methylpentanoate (2,3-dihydroxy-3-methylvalerate) into 2-oxo-3-methylpentanoate (2-oxo-3-methylvalerate) and of (2R)-2,3-dihydroxy-3-methylbutanoate (2,3-dihydroxyisovalerate) into 2-oxo-3-methylbutanoate (2-oxoisovalerate), the penultimate precursor to L-isoleucine and L-valine, respectively. This chain is Dihydroxy-acid dehydratase, found in Methanoregula boonei (strain DSM 21154 / JCM 14090 / 6A8).